The sequence spans 132 residues: Profilin (132 aa).

This sequence belongs to the profilin family. Occurs in many kinds of cells as a complex with monomeric actin in a 1:1 ratio.

Its subcellular location is the cytoplasm. The protein localises to the cytoskeleton. In terms of biological role, binds to actin and affects the structure of the cytoskeleton. At high concentrations, profilin prevents the polymerization of actin, whereas it enhances it at low concentrations. By binding to PIP2, it inhibits the formation of IP3 and DG. The sequence is that of Profilin from Naegleria pringsheimi (Amoeba).